We begin with the raw amino-acid sequence, 952 residues long: Protein translocase subunit SecA (952 aa).

ATP contacts are provided by residues Gln135, 153–157 (GEGKT), and Asp575. Residues 907–921 (AAPAAAIPGVSAKAA) show a composition bias toward low complexity. Positions 907-946 (AAPAAAIPGVSAKAATQSTTPAAKEIGRNDPCPCGSGKKY) are disordered. Positions 938, 940, 949, and 950 each coordinate Zn(2+).

The protein belongs to the SecA family. In terms of assembly, monomer and homodimer. Part of the essential Sec protein translocation apparatus which comprises SecA, SecYEG and auxiliary proteins SecDF. Other proteins may also be involved. Zn(2+) is required as a cofactor.

The protein localises to the cell membrane. It is found in the cytoplasm. The catalysed reaction is ATP + H2O + cellular proteinSide 1 = ADP + phosphate + cellular proteinSide 2.. In terms of biological role, part of the Sec protein translocase complex. Interacts with the SecYEG preprotein conducting channel. Has a central role in coupling the hydrolysis of ATP to the transfer of proteins into and across the cell membrane, serving as an ATP-driven molecular motor driving the stepwise translocation of polypeptide chains across the membrane. This Dehalococcoides mccartyi (strain CBDB1) protein is Protein translocase subunit SecA.